We begin with the raw amino-acid sequence, 229 residues long: Potassium/proton antiporter CemA (229 aa).

Helical transmembrane passes span 7–27 (FTPL…SLSF), 114–134 (LICF…LLIL), 154–174 (ILLL…ELMI), and 189–209 (IISG…KYWI).

This sequence belongs to the CemA family.

It is found in the plastid. It localises to the chloroplast inner membrane. It carries out the reaction K(+)(in) + H(+)(out) = K(+)(out) + H(+)(in). Its function is as follows. Contributes to K(+)/H(+) antiport activity by supporting proton efflux to control proton extrusion and homeostasis in chloroplasts in a light-dependent manner to modulate photosynthesis. Prevents excessive induction of non-photochemical quenching (NPQ) under continuous-light conditions. Indirectly promotes efficient inorganic carbon uptake into chloroplasts. In Gossypium hirsutum (Upland cotton), this protein is Potassium/proton antiporter CemA.